A 307-amino-acid chain; its full sequence is 2-methoxy-6-polyprenyl-1,4-benzoquinol methylase, mitochondrial (307 aa).

The N-terminal 19 residues, 1–19, are a transit peptide targeting the mitochondrion; it reads MLISSRIVRSSLVNVPLRL. S-adenosyl-L-methionine-binding positions include Ser122, Asp148, 179–180, and Ser197; that span reads NG.

It belongs to the class I-like SAM-binding methyltransferase superfamily. MenG/UbiE family. As to quaternary structure, component of a multi-subunit COQ enzyme complex, composed of at least COQ3, COQ4, COQ5, COQ6, COQ7 and COQ9. Interacts with COQ3.

It is found in the mitochondrion inner membrane. It catalyses the reaction 2-methoxy-6-(all-trans-hexaprenyl)benzene-1,4-diol + S-adenosyl-L-methionine = 5-methoxy-2-methyl-3-(all-trans-hexaprenyl)benzene-1,4-diol + S-adenosyl-L-homocysteine + H(+). It functions in the pathway cofactor biosynthesis; ubiquinone biosynthesis. In terms of biological role, methyltransferase required for the conversion of 2-hexaprenyl-6-methoxy-1,4-benzoquinol (DDMQH2) to 2-hexaprenyl-3-methyl-6-methoxy-1,4-benzoquinol (DMQH2). The sequence is that of 2-methoxy-6-polyprenyl-1,4-benzoquinol methylase, mitochondrial from Saccharomyces cerevisiae (strain ATCC 204508 / S288c) (Baker's yeast).